Consider the following 88-residue polypeptide: uncharacterized protein (88 aa).

This is an uncharacterized protein from Sputnik virophage.